The following is a 59-amino-acid chain: UPF0509 protein KPK_3153 (59 aa).

The protein belongs to the UPF0509 family.

The sequence is that of UPF0509 protein KPK_3153 from Klebsiella pneumoniae (strain 342).